Reading from the N-terminus, the 486-residue chain is Pentatricopeptide repeat-containing protein At2g01860 (486 aa).

The interval 111 to 137 is disordered; that stretch reads QKPDKPSRVRPLPLPQPHKLRPLGLPT. 5 PPR repeats span residues 290 to 321, 327 to 361, 362 to 396, 397 to 431, and 432 to 466; these read DSSV…LKKR, SQQD…NREP, SVVM…NCLL, DLPA…GFSP, and TYDI…GLRL.

The protein belongs to the PPR family. P subfamily.

This Arabidopsis thaliana (Mouse-ear cress) protein is Pentatricopeptide repeat-containing protein At2g01860 (EMB975).